The following is a 526-amino-acid chain: Glucose-6-phosphate isomerase (526 aa).

The active-site Proton donor is the E347. Residues H378 and K493 contribute to the active site.

This sequence belongs to the GPI family.

The protein localises to the cytoplasm. It carries out the reaction alpha-D-glucose 6-phosphate = beta-D-fructose 6-phosphate. Its pathway is carbohydrate biosynthesis; gluconeogenesis. The protein operates within carbohydrate degradation; glycolysis; D-glyceraldehyde 3-phosphate and glycerone phosphate from D-glucose: step 2/4. Functionally, catalyzes the reversible isomerization of glucose-6-phosphate to fructose-6-phosphate. The sequence is that of Glucose-6-phosphate isomerase from Chlamydia pneumoniae (Chlamydophila pneumoniae).